Consider the following 256-residue polypeptide: Eukaryotic translation initiation factor 3 subunit J (256 aa).

The interval 1–67 (MAAAAAGDSD…KEEAEVKPEV (67 aa)) is sufficient for interaction with EIF3B. The tract at residues 1–106 (MAAAAAGDSD…LEEPEEPKVL (106 aa)) is disordered. A phosphoserine mark is found at Ser-9, Ser-11, and Ser-18. The segment covering 38–57 (EGEDEDEDVKDNWDDDDDEK) has biased composition (acidic residues). Residues 58–104 (KEEAEVKPEVKISEKKKIAEKIKEKERQQKKRQEEIKKRLEEPEEPK) are compositionally biased toward basic and acidic residues. Positions 68 to 133 (KISEKKKIAE…ESDLELAKET (66 aa)) form a coiled coil. Lys-104 is covalently cross-linked (Glycyl lysine isopeptide (Lys-Gly) (interchain with G-Cter in SUMO2)). A Phosphothreonine modification is found at Thr-107. At Ser-125 the chain carries Phosphoserine. Residues 214 to 243 (QSKAKKKKKGVVPGGGLKATMKDDLADYGG) form a disordered region. The tract at residues 241-256 (YGGYDGGYAQDYEDFM) is promotes stable association with the 40S ribosome. Tyr-252 is modified (phosphotyrosine).

It belongs to the eIF-3 subunit J family. Component of the eukaryotic translation initiation factor 3 (eIF-3) complex, which is composed of 13 subunits: EIF3A, EIF3B, EIF3C, EIF3D, EIF3E, EIF3F, EIF3G, EIF3H, EIF3I, EIF3J, EIF3K, EIF3L and EIF3M. The eIF-3 complex appears to include 3 stable modules: module A is composed of EIF3A, EIF3B, EIF3G and EIF3I; module B is composed of EIF3F, EIF3H, and EIF3M; and module C is composed of EIF3C, EIF3D, EIF3E, EIF3K and EIF3L. EIF3C of module C binds EIF3B of module A and EIF3H of module B, thereby linking the three modules. EIF3J is a labile subunit that binds to the eIF-3 complex via EIF3B. The eIF-3 complex interacts with RPS6KB1 under conditions of nutrient depletion. Mitogenic stimulation leads to binding and activation of a complex composed of MTOR and RPTOR, leading to phosphorylation and release of RPS6KB1 and binding of EIF4B to eIF-3. In terms of processing, phosphorylated. Phosphorylation is enhanced upon serum stimulation.

It is found in the cytoplasm. Functionally, component of the eukaryotic translation initiation factor 3 (eIF-3) complex, which is required for several steps in the initiation of protein synthesis. The eIF-3 complex associates with the 40S ribosome and facilitates the recruitment of eIF-1, eIF-1A, eIF-2:GTP:methionyl-tRNAi and eIF-5 to form the 43S pre-initiation complex (43S PIC). The eIF-3 complex stimulates mRNA recruitment to the 43S PIC and scanning of the mRNA for AUG recognition. The eIF-3 complex is also required for disassembly and recycling of post-termination ribosomal complexes and subsequently prevents premature joining of the 40S and 60S ribosomal subunits prior to initiation. The eIF-3 complex specifically targets and initiates translation of a subset of mRNAs involved in cell proliferation, including cell cycling, differentiation and apoptosis, and uses different modes of RNA stem-loop binding to exert either translational activation or repression. This subunit binds directly within the mRNA entry channel of the 40S ribosome to the aminoacyl (A) site. It may regulate the interaction between the 43S PIC and mRNA. This is Eukaryotic translation initiation factor 3 subunit J from Bos taurus (Bovine).